The chain runs to 304 residues: Acetaldehyde dehydrogenase 4 (304 aa).

Cys-131 acts as the Acyl-thioester intermediate in catalysis. NAD(+)-binding positions include 162-170 and Asn-273; that span reads SAGPGTRKN.

Belongs to the acetaldehyde dehydrogenase family.

It carries out the reaction acetaldehyde + NAD(+) + CoA = acetyl-CoA + NADH + H(+). The protein is Acetaldehyde dehydrogenase 4 of Dechloromonas aromatica (strain RCB).